The chain runs to 310 residues: MPSTKVAALSAVLALASTVAGHGFVQNIVIDGKSYSGYLVNQFPYESNPPAVIGWATTATDLGFVAPSEYTNADIICHKNATPGALSAPVAAGGTVELQWTTWPDSHHGPVISYLANCNGNCSTVDKTKLNFVKIDQGGLIDDTTPPGTWASDKLIAANNSWTVTIPSTIAPGNYVLRHEIIALHSAGNADGAQNYPQCINLEITGSGTAAPSGTAGEKLYTSTDPGILVNIYQSFGAANGAVATGSATAVATTAAASATATPTTLVTSVAPASSTSATAVVTTVAPAVTDVVTVTDVVTVTTVITTTVL.

Residues 1-21 (MPSTKVAALSAVLALASTVAG) form the signal peptide. Residues His22 and His107 each coordinate Cu(2+). 2 disulfide bridges follow: Cys77–Cys199 and Cys118–Cys122. Asn121 and Asn159 each carry an N-linked (GlcNAc...) asparagine glycan. His185 is a binding site for O2. Tyr196 serves as a coordination point for Cu(2+).

This sequence belongs to the polysaccharide monooxygenase AA9 family. It depends on Cu(2+) as a cofactor.

It is found in the secreted. The catalysed reaction is [(1-&gt;4)-beta-D-glucosyl]n+m + reduced acceptor + O2 = 4-dehydro-beta-D-glucosyl-[(1-&gt;4)-beta-D-glucosyl]n-1 + [(1-&gt;4)-beta-D-glucosyl]m + acceptor + H2O.. Lytic polysaccharide monooxygenase (LPMO) that depolymerizes crystalline and amorphous polysaccharides via the oxidation of scissile alpha- or beta-(1-4)-glycosidic bonds, yielding C1, C4 as well as C6 oxidation products. Catalysis by LPMOs requires the reduction of the active-site copper from Cu(II) to Cu(I) by a reducing agent and H(2)O(2) or O(2) as a cosubstrate. Active on cellulose, but not on xylan, starch, or chitin. The chain is AA9 family lytic polysaccharide monooxygenase A from Talaromyces pinophilus (Penicillium pinophilum).